A 430-amino-acid polypeptide reads, in one-letter code: Probable aspartic-type endopeptidase TRV_06366 (430 aa).

Residues 1–17 (MHVSTLLVAVLLPLALS) form the signal peptide. Residues 18–87 (KPTPRKKTSS…SKATAGSGKE (70 aa)) constitute a propeptide, activation peptide. A disordered region spans residues 61 to 104 (HEMEGYHPQPISKLPGNSKATAGSGKEGVESQDEKGEVVNNPTD). Basic and acidic residues predominate over residues 87–104 (EGVESQDEKGEVVNNPTD). Positions 109 to 427 (FLSPVTIGGQ…DQRGPSISLA (319 aa)) constitute a Peptidase A1 domain. The active site involves D125. An N-linked (GlcNAc...) asparagine glycan is attached at N306. D314 is a catalytic residue.

It belongs to the peptidase A1 family.

It localises to the secreted. Functionally, probable secreted aspartic-type endopeptidase which contributes to virulence. The sequence is that of Probable aspartic-type endopeptidase TRV_06366 from Trichophyton verrucosum (strain HKI 0517).